Reading from the N-terminus, the 338-residue chain is tRNA N6-adenosine threonylcarbamoyltransferase (338 aa).

The Fe cation site is built by histidine 111 and histidine 115. Residues 134–138 (LVSGG), aspartate 167, glycine 180, and asparagine 272 each bind substrate. Fe cation is bound at residue aspartate 300.

This sequence belongs to the KAE1 / TsaD family. Requires Fe(2+) as cofactor.

Its subcellular location is the cytoplasm. The catalysed reaction is L-threonylcarbamoyladenylate + adenosine(37) in tRNA = N(6)-L-threonylcarbamoyladenosine(37) in tRNA + AMP + H(+). Its function is as follows. Required for the formation of a threonylcarbamoyl group on adenosine at position 37 (t(6)A37) in tRNAs that read codons beginning with adenine. Is involved in the transfer of the threonylcarbamoyl moiety of threonylcarbamoyl-AMP (TC-AMP) to the N6 group of A37, together with TsaE and TsaB. TsaD likely plays a direct catalytic role in this reaction. This chain is tRNA N6-adenosine threonylcarbamoyltransferase, found in Shewanella denitrificans (strain OS217 / ATCC BAA-1090 / DSM 15013).